A 162-amino-acid polypeptide reads, in one-letter code: uncharacterized protein (162 aa).

The first 18 residues, 1–18 (MRKTFLTLLCVSSAIAHA), serve as a signal peptide directing secretion.

The protein belongs to the fimbrial protein family.

Part of the yfcOPQRSUV fimbrial operon. Could contribute to adhesion to various surfaces in specific environmental niches. Increases adhesion to eukaryotic T24 bladder epithelial cells in the absence of fim genes. This is an uncharacterized protein from Escherichia coli (strain K12).